The following is a 609-amino-acid chain: UvrABC system protein C (609 aa).

In terms of domain architecture, GIY-YIG spans 15–92 (TGSGVYQMQD…IKQFRPRYNV (78 aa)). The 36-residue stretch at 202–237 (DQVIIKLTERMEVTSENLVFEEAAHYRDQIRQLRRL) folds into the UVR domain.

Belongs to the UvrC family. As to quaternary structure, interacts with UvrB in an incision complex.

The protein resides in the cytoplasm. The UvrABC repair system catalyzes the recognition and processing of DNA lesions. UvrC both incises the 5' and 3' sides of the lesion. The N-terminal half is responsible for the 3' incision and the C-terminal half is responsible for the 5' incision. The sequence is that of UvrABC system protein C from Coxiella burnetii (strain RSA 493 / Nine Mile phase I).